The following is a 175-amino-acid chain: Large ribosomal subunit protein uL10 (175 aa).

It belongs to the universal ribosomal protein uL10 family. Part of the ribosomal stalk of the 50S ribosomal subunit. The N-terminus interacts with L11 and the large rRNA to form the base of the stalk. The C-terminus forms an elongated spine to which L12 dimers bind in a sequential fashion forming a multimeric L10(L12)X complex.

In terms of biological role, forms part of the ribosomal stalk, playing a central role in the interaction of the ribosome with GTP-bound translation factors. The polypeptide is Large ribosomal subunit protein uL10 (Prochlorococcus marinus (strain MIT 9313)).